The primary structure comprises 492 residues: Glutamyl-tRNA(Gln) amidotransferase subunit A (492 aa).

Active-site charge relay system residues include K78 and S158. The active-site Acyl-ester intermediate is S182.

The protein belongs to the amidase family. GatA subfamily. In terms of assembly, heterotrimer of A, B and C subunits.

It carries out the reaction L-glutamyl-tRNA(Gln) + L-glutamine + ATP + H2O = L-glutaminyl-tRNA(Gln) + L-glutamate + ADP + phosphate + H(+). In terms of biological role, allows the formation of correctly charged Gln-tRNA(Gln) through the transamidation of misacylated Glu-tRNA(Gln) in organisms which lack glutaminyl-tRNA synthetase. The reaction takes place in the presence of glutamine and ATP through an activated gamma-phospho-Glu-tRNA(Gln). This chain is Glutamyl-tRNA(Gln) amidotransferase subunit A, found in Rickettsia akari (strain Hartford).